We begin with the raw amino-acid sequence, 96 residues long: Large ribosomal subunit protein eL14 (96 aa).

It belongs to the eukaryotic ribosomal protein eL14 family.

The sequence is that of Large ribosomal subunit protein eL14 from Saccharolobus islandicus (strain M.14.25 / Kamchatka #1) (Sulfolobus islandicus).